The primary structure comprises 160 residues: Large ribosomal subunit protein bL9 (160 aa).

Belongs to the bacterial ribosomal protein bL9 family.

Its function is as follows. Binds to the 23S rRNA. This is Large ribosomal subunit protein bL9 from Neorickettsia sennetsu (strain ATCC VR-367 / Miyayama) (Ehrlichia sennetsu).